Consider the following 209-residue polypeptide: Octanoyltransferase (209 aa).

A BPL/LPL catalytic domain is found at 30-209; sequence DHKPEIIYLV…IQTEFNKIFK (180 aa). Substrate-binding positions include 69-76, 143-145, and 156-158; these read RGGKFTFH, AIG, and GVA. Cys-174 acts as the Acyl-thioester intermediate in catalysis.

This sequence belongs to the LipB family.

The protein localises to the cytoplasm. The catalysed reaction is octanoyl-[ACP] + L-lysyl-[protein] = N(6)-octanoyl-L-lysyl-[protein] + holo-[ACP] + H(+). It functions in the pathway protein modification; protein lipoylation via endogenous pathway; protein N(6)-(lipoyl)lysine from octanoyl-[acyl-carrier-protein]: step 1/2. Its function is as follows. Catalyzes the transfer of endogenously produced octanoic acid from octanoyl-acyl-carrier-protein onto the lipoyl domains of lipoate-dependent enzymes. Lipoyl-ACP can also act as a substrate although octanoyl-ACP is likely to be the physiological substrate. In Rickettsia conorii (strain ATCC VR-613 / Malish 7), this protein is Octanoyltransferase.